The chain runs to 367 residues: WD repeat-containing protein 31 (367 aa).

WD repeat units lie at residues 53-90, 94-132, 137-175, 179-217, 221-264, 269-311, and 315-353; these read AFQEYSPAHMDTVSVVAALNSDLCVSGGKDKTVVAYNW, NVVKRFKGHEHEITKVACIPKSSQFFSASRDRMVMMWDL, QPRQQLCGHAMVVTGLAVSPDSSQLCTGSRDNTLLLWDV, QSVERASVSRNVVTHLCWVPREPYILQTSEDKTLRLWDS, QVAH…LWDL, NRIC…IWNQ, and ACLFTLSLDGSGPLTSLAVGDAISLLCASFNRGIHLLRM.

This Homo sapiens (Human) protein is WD repeat-containing protein 31 (WDR31).